A 117-amino-acid polypeptide reads, in one-letter code: Large ribosomal subunit protein bL17 (117 aa).

The protein belongs to the bacterial ribosomal protein bL17 family. In terms of assembly, part of the 50S ribosomal subunit. Contacts protein L32.

This is Large ribosomal subunit protein bL17 from Exiguobacterium sp. (strain ATCC BAA-1283 / AT1b).